A 125-amino-acid chain; its full sequence is SKP1-like protein 7 (125 aa).

An interaction with the F-box domain of F-box proteins region spans residues 94-125; the sequence is MNAAYDLHIKSLLALAYQTVADMVNDNKWAFE.

Belongs to the SKP1 family. As to quaternary structure, part of a SCF (SKP1-cullin-F-box) protein ligase complex. In terms of tissue distribution, restricted to siliques.

Its subcellular location is the nucleus. It functions in the pathway protein modification; protein ubiquitination. Its function is as follows. Involved in ubiquitination and subsequent proteasomal degradation of target proteins. Together with CUL1, RBX1 and a F-box protein, it forms a SCF E3 ubiquitin ligase complex. The functional specificity of this complex depends on the type of F-box protein. In the SCF complex, it serves as an adapter that links the F-box protein to CUL1. The chain is SKP1-like protein 7 (ASK7) from Arabidopsis thaliana (Mouse-ear cress).